A 256-amino-acid chain; its full sequence is Cell division protein ZipA (256 aa).

Residues 1–6 (MQYGRQ) are Periplasmic-facing. The chain crosses the membrane as a helical span at residues 7–27 (ILICIGILTVIILLLYGLLNS). The Cytoplasmic segment spans residues 28-256 (YWDRTVTFCK…RHVLSANKST (229 aa)).

This sequence belongs to the ZipA family. As to quaternary structure, interacts with FtsZ via their C-terminal domains.

It localises to the cell inner membrane. Functionally, essential cell division protein that stabilizes the FtsZ protofilaments by cross-linking them and that serves as a cytoplasmic membrane anchor for the Z ring. Also required for the recruitment to the septal ring of downstream cell division proteins. The chain is Cell division protein ZipA from Baumannia cicadellinicola subsp. Homalodisca coagulata.